The chain runs to 503 residues: Aromatase (503 aa).

A heme-binding site is contributed by Cys-437.

It belongs to the cytochrome P450 family. It depends on heme as a cofactor.

Its subcellular location is the membrane. It catalyses the reaction testosterone + 3 reduced [NADPH--hemoprotein reductase] + 3 O2 = 17beta-estradiol + formate + 3 oxidized [NADPH--hemoprotein reductase] + 4 H2O + 4 H(+). The enzyme catalyses androst-4-ene-3,17-dione + 3 reduced [NADPH--hemoprotein reductase] + 3 O2 = estrone + formate + 3 oxidized [NADPH--hemoprotein reductase] + 4 H2O + 4 H(+). Functionally, catalyzes the formation of aromatic C18 estrogens from C19 androgens. The protein is Aromatase (CYP19A1) of Oryctolagus cuniculus (Rabbit).